The primary structure comprises 421 residues: Phosphatidylinositol 5-phosphate 4-kinase type-2 gamma (421 aa).

Ala-2 carries the N-acetylalanine modification. Ser-26 bears the Phosphoserine mark. The PIPK domain occupies 43-420; that stretch reads AADPLVGVFL…RFLDFITNIF (378 aa). Positions 69–75 are required for interaction with PIP5K1A; that stretch reads VMLLPDD. A Phosphoserine modification is found at Ser-349.

Interacts with PIP5K1A; the interaction inhibits PIP5K1A kinase activity. In terms of processing, phosphorylated, phosphorylation is induced by EGF.

It localises to the endoplasmic reticulum. It is found in the cytoplasm. The catalysed reaction is a 1,2-diacyl-sn-glycero-3-phospho-(1D-myo-inositol-5-phosphate) + ATP = a 1,2-diacyl-sn-glycero-3-phospho-(1D-myo-inositol-4,5-bisphosphate) + ADP + H(+). The enzyme catalyses 1,2-dihexadecanoyl-sn-glycero-3-phospho-(1D-myo-inositol-5-phosphate) + ATP = 1,2-dihexadecanoyl-sn-glycero-3-phospho-(1D-myo-inositol-4,5-bisphosphate) + ADP + H(+). It carries out the reaction 1,2-dihexadecanoyl-sn-glycero-3-phospho-(1D-myo-inositol-5-phosphate) + GTP = 1,2-dihexadecanoyl-sn-glycero-3-phospho-(1D-myo-inositol-4,5-bisphosphate) + GDP + H(+). In terms of biological role, phosphatidylinositol 5-phosphate 4-kinase with low enzymatic activity. May be a GTP sensor, has higher GTP-dependent kinase activity than ATP-dependent kinase activity. PIP4Ks negatively regulate insulin signaling through a catalytic-independent mechanism. They interact with PIP5Ks and suppress PIP5K-mediated PtdIns(4,5)P2 synthesis and insulin-dependent conversion to PtdIns(3,4,5)P3. This chain is Phosphatidylinositol 5-phosphate 4-kinase type-2 gamma (PIP4K2C), found in Pongo abelii (Sumatran orangutan).